Consider the following 444-residue polypeptide: tRNA-2-methylthio-N(6)-dimethylallyladenosine synthase (444 aa).

The MTTase N-terminal domain maps to 7-121 (KTFHVKSFGC…LPELIARAER (115 aa)). [4Fe-4S] cluster is bound by residues C16, C52, C84, C158, C162, and C165. The Radical SAM core domain maps to 144-376 (GNQRPTAFLT…QALLNEQQQA (233 aa)). The TRAM domain occupies 379 to 441 (EATVGRTTRL…PNSLGAEPLM (63 aa)).

This sequence belongs to the methylthiotransferase family. MiaB subfamily. In terms of assembly, monomer. The cofactor is [4Fe-4S] cluster.

Its subcellular location is the cytoplasm. The catalysed reaction is N(6)-dimethylallyladenosine(37) in tRNA + (sulfur carrier)-SH + AH2 + 2 S-adenosyl-L-methionine = 2-methylsulfanyl-N(6)-dimethylallyladenosine(37) in tRNA + (sulfur carrier)-H + 5'-deoxyadenosine + L-methionine + A + S-adenosyl-L-homocysteine + 2 H(+). Its function is as follows. Catalyzes the methylthiolation of N6-(dimethylallyl)adenosine (i(6)A), leading to the formation of 2-methylthio-N6-(dimethylallyl)adenosine (ms(2)i(6)A) at position 37 in tRNAs that read codons beginning with uridine. This Sphingopyxis alaskensis (strain DSM 13593 / LMG 18877 / RB2256) (Sphingomonas alaskensis) protein is tRNA-2-methylthio-N(6)-dimethylallyladenosine synthase.